The chain runs to 249 residues: 1-(5-phosphoribosyl)-5-[(5-phosphoribosylamino)methylideneamino] imidazole-4-carboxamide isomerase (249 aa).

The active-site Proton acceptor is Asp8. Asp129 (proton donor) is an active-site residue.

It belongs to the HisA/HisF family.

It is found in the cytoplasm. The enzyme catalyses 1-(5-phospho-beta-D-ribosyl)-5-[(5-phospho-beta-D-ribosylamino)methylideneamino]imidazole-4-carboxamide = 5-[(5-phospho-1-deoxy-D-ribulos-1-ylimino)methylamino]-1-(5-phospho-beta-D-ribosyl)imidazole-4-carboxamide. It participates in amino-acid biosynthesis; L-histidine biosynthesis; L-histidine from 5-phospho-alpha-D-ribose 1-diphosphate: step 4/9. In Magnetococcus marinus (strain ATCC BAA-1437 / JCM 17883 / MC-1), this protein is 1-(5-phosphoribosyl)-5-[(5-phosphoribosylamino)methylideneamino] imidazole-4-carboxamide isomerase.